We begin with the raw amino-acid sequence, 117 residues long: Large ribosomal subunit protein bL20 (117 aa).

The protein belongs to the bacterial ribosomal protein bL20 family.

Its function is as follows. Binds directly to 23S ribosomal RNA and is necessary for the in vitro assembly process of the 50S ribosomal subunit. It is not involved in the protein synthesizing functions of that subunit. The chain is Large ribosomal subunit protein bL20 from Rippkaea orientalis (strain PCC 8801 / RF-1) (Cyanothece sp. (strain PCC 8801)).